Here is a 289-residue protein sequence, read N- to C-terminus: Acetyl-coenzyme A carboxylase carboxyl transferase subunit beta (289 aa).

Positions 34-289 (MWVKCNKCGD…KLINMHQNSF (256 aa)) constitute a CoA carboxyltransferase N-terminal domain. Residues Cys38, Cys41, Cys57, and Cys60 each contribute to the Zn(2+) site. The C4-type zinc finger occupies 38–60 (CNKCGDILYQNDLEKNYMVCNLC).

Belongs to the AccD/PCCB family. As to quaternary structure, acetyl-CoA carboxylase is a heterohexamer composed of biotin carboxyl carrier protein (AccB), biotin carboxylase (AccC) and two subunits each of ACCase subunit alpha (AccA) and ACCase subunit beta (AccD). Zn(2+) serves as cofactor.

The protein resides in the cytoplasm. It catalyses the reaction N(6)-carboxybiotinyl-L-lysyl-[protein] + acetyl-CoA = N(6)-biotinyl-L-lysyl-[protein] + malonyl-CoA. It participates in lipid metabolism; malonyl-CoA biosynthesis; malonyl-CoA from acetyl-CoA: step 1/1. Component of the acetyl coenzyme A carboxylase (ACC) complex. Biotin carboxylase (BC) catalyzes the carboxylation of biotin on its carrier protein (BCCP) and then the CO(2) group is transferred by the transcarboxylase to acetyl-CoA to form malonyl-CoA. In Clostridium botulinum (strain Langeland / NCTC 10281 / Type F), this protein is Acetyl-coenzyme A carboxylase carboxyl transferase subunit beta.